Consider the following 356-residue polypeptide: sn-glycerol-3-phosphate import ATP-binding protein UgpC (356 aa).

Positions 4-235 constitute an ABC transporter domain; it reads LKLQAVTKSW…PASLFVASFI (232 aa). Position 37–44 (37–44) interacts with ATP; that stretch reads GPSGCGKS.

It belongs to the ABC transporter superfamily. sn-glycerol-3-phosphate importer (TC 3.A.1.1.3) family. In terms of assembly, the complex is composed of two ATP-binding proteins (UgpC), two transmembrane proteins (UgpA and UgpE) and a solute-binding protein (UgpB).

The protein localises to the cell inner membrane. It carries out the reaction sn-glycerol 3-phosphate(out) + ATP + H2O = sn-glycerol 3-phosphate(in) + ADP + phosphate + H(+). It catalyses the reaction glycerol 2-phosphate(out) + ATP + H2O = glycerol 2-phosphate(in) + ADP + phosphate + H(+). With respect to regulation, ATPase activity is stimulated when UgpB is bound to G3P. Transport is inhibited in vivo by increasing levels of internal phosphate. However, ATPase activity in proteoliposomes is neither inhibited by phosphate nor by the signal transducing protein PhoU or the phosphodiesterase UgpQ. Activated by gluconate and inhibited by fumarate. In terms of biological role, part of the ABC transporter complex UgpBAEC involved in sn-glycerol-3-phosphate (G3P) import. Responsible for energy coupling to the transport system. Can also transport glycerophosphoryl diesters, which are hydrolyzed to G3P and alcohol during transport. The G3P moiety can be detected in the cytoplasm whereas the corresponding alcohol is usually found in the culture medium. It was proposed by Yang et al that the complex could also transport glycerol-2-phosphate (G2P) in vivo, but it was shown later by Wuttge et al that UgpB does not bind G2P, questioning this transport activity. G2P might be converted in the periplasm to G3P before its transport. This is sn-glycerol-3-phosphate import ATP-binding protein UgpC from Escherichia coli (strain K12).